Here is a 504-residue protein sequence, read N- to C-terminus: Anaerobic nitric oxide reductase transcription regulator NorR (504 aa).

A 4-aspartylphosphate modification is found at Asp57. Residues 187–416 (MIGLSPGMTQ…LEHAIHRAVV (230 aa)) enclose the Sigma-54 factor interaction domain. Residues 215–222 (GETGTGKE) and 278–287 (ADNGTLFLDE) contribute to the ATP site. Positions 479 to 498 (WAACARMLETDVANLHRLAK) form a DNA-binding region, H-T-H motif.

It functions in the pathway nitrogen metabolism; nitric oxide reduction. Its function is as follows. Required for the expression of anaerobic nitric oxide (NO) reductase, acts as a transcriptional activator for at least the norVW operon. Activation also requires sigma-54. This is Anaerobic nitric oxide reductase transcription regulator NorR from Escherichia coli O17:K52:H18 (strain UMN026 / ExPEC).